The sequence spans 242 residues: UDP-2,3-diacylglucosamine hydrolase (242 aa).

Aspartate 7, histidine 9, aspartate 40, asparagine 78, and histidine 113 together coordinate Mn(2+). Asparagine 78–arginine 79 lines the substrate pocket. Positions 121, 159, 163, 166, and 194 each coordinate substrate. Histidine 194 and histidine 196 together coordinate Mn(2+).

It belongs to the LpxH family. Mn(2+) serves as cofactor.

The protein resides in the cell inner membrane. The enzyme catalyses UDP-2-N,3-O-bis[(3R)-3-hydroxytetradecanoyl]-alpha-D-glucosamine + H2O = 2-N,3-O-bis[(3R)-3-hydroxytetradecanoyl]-alpha-D-glucosaminyl 1-phosphate + UMP + 2 H(+). Its pathway is glycolipid biosynthesis; lipid IV(A) biosynthesis; lipid IV(A) from (3R)-3-hydroxytetradecanoyl-[acyl-carrier-protein] and UDP-N-acetyl-alpha-D-glucosamine: step 4/6. Its function is as follows. Hydrolyzes the pyrophosphate bond of UDP-2,3-diacylglucosamine to yield 2,3-diacylglucosamine 1-phosphate (lipid X) and UMP by catalyzing the attack of water at the alpha-P atom. Involved in the biosynthesis of lipid A, a phosphorylated glycolipid that anchors the lipopolysaccharide to the outer membrane of the cell. The sequence is that of UDP-2,3-diacylglucosamine hydrolase from Ectopseudomonas mendocina (strain ymp) (Pseudomonas mendocina).